Consider the following 161-residue polypeptide: Type-1 angiotensin II receptor-associated protein (161 aa).

Residues 1 to 26 lie on the Extracellular side of the membrane; it reads MELPAVNLKVILLVHWLLTTWGCLVF. A helical transmembrane segment spans residues 27-47; the sequence is SSSYAWGNFTILALGVWAVAQ. Over 48 to 53 the chain is Cytoplasmic; sequence RDSIDA. A helical transmembrane segment spans residues 54–74; it reads IGMFLGGLVATIFLDIIYISI. Over 75–86 the chain is Extracellular; sequence FYSSVATGDTGR. The chain crosses the membrane as a helical span at residues 87–107; it reads FGAGMAILSLLLKPFSCCLVY. Residues 108–161 are Cytoplasmic-facing; that stretch reads HMHRERGGELPLRPDFFGPSQEHSAYQTIDSSSDAAADPFASLENKGQAVPRGY. Positions 110 to 122 are interaction with AGTR1; the sequence is HRERGGELPLRPD. S127 is subject to Phosphoserine. Residue T135 is modified to Phosphothreonine. At S138 the chain carries Phosphoserine.

In terms of assembly, interacts with RACK1, and with the C-terminal region of AGTR1. In terms of tissue distribution, ubiquitous but more abundant in kidney, testis and heart.

The protein localises to the endoplasmic reticulum membrane. It localises to the golgi apparatus membrane. Its subcellular location is the cytoplasmic vesicle membrane. In terms of biological role, appears to be a negative regulator of type-1 angiotensin II receptor-mediated signaling by regulating receptor internalization as well as mechanism of receptor desensitization such as phosphorylation. Also induces a decrease in angiotensin II-stimulated transcriptional activity. May play a role of negative regulator in cardiomyocyte hypertrophy induced by angiotensin II through an inhibition of p38 mitogen-activated protein kinase pathway. The protein is Type-1 angiotensin II receptor-associated protein (Agtrap) of Mus musculus (Mouse).